We begin with the raw amino-acid sequence, 453 residues long: Chromosomal replication initiator protein DnaA (453 aa).

Positions 1 to 79 are domain I, interacts with DnaA modulators; sequence MKSLIQEKWN…KTAIAEVINQ (79 aa). A domain II region spans residues 79-111; sequence QDFEIEFVLLSQTKAEEKVQTQAPNKIKNESLS. The domain III, AAA+ region stretch occupies residues 112–330; sequence YLNPRYTFDT…GALTKIVALS (219 aa). G156, G158, K159, and T160 together coordinate ATP. The interval 331–453 is domain IV, binds dsDNA; that stretch reads RLKKKEVDVI…VLIKKINPTP (123 aa).

This sequence belongs to the DnaA family. In terms of assembly, oligomerizes as a right-handed, spiral filament on DNA at oriC.

It localises to the cytoplasm. Its function is as follows. Plays an essential role in the initiation and regulation of chromosomal replication. ATP-DnaA binds to the origin of replication (oriC) to initiate formation of the DNA replication initiation complex once per cell cycle. Binds the DnaA box (a 9 base pair repeat at the origin) and separates the double-stranded (ds)DNA. Forms a right-handed helical filament on oriC DNA; dsDNA binds to the exterior of the filament while single-stranded (ss)DNA is stabiized in the filament's interior. The ATP-DnaA-oriC complex binds and stabilizes one strand of the AT-rich DNA unwinding element (DUE), permitting loading of DNA polymerase. After initiation quickly degrades to an ADP-DnaA complex that is not apt for DNA replication. Binds acidic phospholipids. This is Chromosomal replication initiator protein DnaA from Lachnoclostridium phytofermentans (strain ATCC 700394 / DSM 18823 / ISDg) (Clostridium phytofermentans).